Here is a 1766-residue protein sequence, read N- to C-terminus: Putative ATP-dependent RNA helicase R366 (1766 aa).

The interval 209 to 239 is disordered; sequence KSSSNQNSNQSNQESNESNQEPNESNQEINQ. Residues 210–239 show a composition bias toward low complexity; it reads SSSNQNSNQSNQESNESNQEPNESNQEINQ. Residues 656 to 865 form the Helicase ATP-binding domain; that stretch reads YHHYSNNRVL…RYYRRINDNR (210 aa). 669-676 is an ATP binding site; sequence GATGVGKS. The short motif at 812 to 815 is the DEAH box element; the sequence is DEAH. Residues 947 to 1116 form the Helicase C-terminal domain; the sequence is DIHKSIKAIN…TMVKLIKSYP (170 aa).

This sequence belongs to the DEAD box helicase family. DEAH subfamily.

It carries out the reaction ATP + H2O = ADP + phosphate + H(+). The polypeptide is Putative ATP-dependent RNA helicase R366 (Acanthamoeba polyphaga mimivirus (APMV)).